Reading from the N-terminus, the 363-residue chain is D-alanine--D-alanine ligase (363 aa).

The ATP-grasp domain maps to 148–353 (KKLLAAEGLP…YGTLVSTLIE (206 aa)). Residue 176–231 (RERLGLPVFVKPARAGSSIGITKVDDWAALDTAIAAAREHDPKVIVEAGIVGREVE) coordinates ATP. D308, E320, and N322 together coordinate Mg(2+).

It belongs to the D-alanine--D-alanine ligase family. The cofactor is Mg(2+). Requires Mn(2+) as cofactor.

The protein localises to the cytoplasm. It carries out the reaction 2 D-alanine + ATP = D-alanyl-D-alanine + ADP + phosphate + H(+). The protein operates within cell wall biogenesis; peptidoglycan biosynthesis. Its function is as follows. Cell wall formation. The sequence is that of D-alanine--D-alanine ligase from Nocardia farcinica (strain IFM 10152).